The chain runs to 60 residues: Potassium channel toxin alpha-KTx 12.5 (60 aa).

A signal peptide spans Met-1–Cys-22. 3 disulfides stabilise this stretch: Cys-30–Cys-51, Cys-36–Cys-56, and Cys-40–Cys-58.

The protein belongs to the short scorpion toxin superfamily. Potassium channel inhibitor family. Alpha-KTx 12 subfamily. In terms of tissue distribution, expressed by the venom gland.

It localises to the secreted. Its function is as follows. This recombinant toxin inhibits the mammalian voltage-gated potassium channels Kv1.3/KCNA3 (IC(50)=28 nM). Kv1.1/KCNA1 and Kv1.2/KCNA2 potassium channels are also weakly inhibited (IC(50)=1.73 uM and IC(50)=12.63 uM, respectively). In Lychas mucronatus (Chinese swimming scorpion), this protein is Potassium channel toxin alpha-KTx 12.5.